A 108-amino-acid polypeptide reads, in one-letter code: Glutaredoxin-C10 (108 aa).

A Glutaredoxin domain is found at 1-107 (MERVAKLASE…PMLKNAGALW (107 aa)). C21 and C24 are disulfide-bonded. A Responsive for interaction with TGA factors motif is present at residues 105–108 (ALWL).

It belongs to the glutaredoxin family. CC-type subfamily.

The protein localises to the cytoplasm. It localises to the nucleus. Functionally, has a glutathione-disulfide oxidoreductase activity in the presence of NADPH and glutathione reductase. Reduces low molecular weight disulfides and proteins. The protein is Glutaredoxin-C10 (GRXC10) of Oryza sativa subsp. japonica (Rice).